Reading from the N-terminus, the 124-residue chain is Small ribosomal subunit protein bS16 (124 aa).

The tract at residues 82 to 124 is disordered; that stretch reads LAKRPARSNPTKAVPGKKAQERAAEAKQKAEDAAAAAAESAAE. The segment covering 99 to 113 has biased composition (basic and acidic residues); sequence KAQERAAEAKQKAED. Low complexity predominate over residues 114-124; it reads AAAAAAESAAE.

Belongs to the bacterial ribosomal protein bS16 family.

In Sinorhizobium fredii (strain NBRC 101917 / NGR234), this protein is Small ribosomal subunit protein bS16.